A 59-amino-acid polypeptide reads, in one-letter code: Three-finger toxin MS1 (59 aa).

Disulfide bonds link Cys-3–Cys-22, Cys-17–Cys-39, Cys-41–Cys-52, and Cys-53–Cys-58.

This sequence belongs to the three-finger toxin family. Short-chain subfamily. Type I alpha-neurotoxin sub-subfamily. Expressed by the venom gland.

The protein localises to the secreted. Its function is as follows. Produces peripheral paralysis by blocking neuromuscular transmission at the postsynaptic site. Binds to and inhibits the endogenous nicotinic acetylcholine receptors (nAChR) in human rhabdomyosarcoma TE 671 cell line with an IC(50) of 48.2 mM. This neurotoxin is lethal to mice by intraperitoneal injection and to zebrafish by injection at the back of the dorsolateral region. In Micrurus surinamensis (Surinam coral snake), this protein is Three-finger toxin MS1.